Consider the following 199-residue polypeptide: Imidazoleglycerol-phosphate dehydratase (199 aa).

This sequence belongs to the imidazoleglycerol-phosphate dehydratase family.

It localises to the cytoplasm. It carries out the reaction D-erythro-1-(imidazol-4-yl)glycerol 3-phosphate = 3-(imidazol-4-yl)-2-oxopropyl phosphate + H2O. Its pathway is amino-acid biosynthesis; L-histidine biosynthesis; L-histidine from 5-phospho-alpha-D-ribose 1-diphosphate: step 6/9. The chain is Imidazoleglycerol-phosphate dehydratase from Acidithiobacillus ferrooxidans (strain ATCC 53993 / BNL-5-31) (Leptospirillum ferrooxidans (ATCC 53993)).